We begin with the raw amino-acid sequence, 136 residues long: Heme-binding protein Rv0203 (136 aa).

The N-terminal stretch at 1–27 is a signal peptide; the sequence is MKTGTATTRRRLLAVLIALALPGAAVA. A disulfide bridge connects residues Cys41 and Cys115. Heme-binding residues include Tyr60, His64, and His90.

In terms of assembly, dimer of dimers.

The protein localises to the secreted. Part of a heme-iron acquisition system. Acts by binding heme and delivering it to the membrane proteins MmpL3 and MmpL11. Can use free heme or heme from host hemoglobin. This Mycobacterium tuberculosis (strain ATCC 25618 / H37Rv) protein is Heme-binding protein Rv0203.